Consider the following 62-residue polypeptide: Cytotoxin 7 (62 aa).

The signal sequence occupies residues 1-2 (YT). 4 disulfide bridges follow: Cys5–Cys23, Cys16–Cys40, Cys44–Cys55, and Cys56–Cys61.

This sequence belongs to the three-finger toxin family. Short-chain subfamily. Type IA cytotoxin sub-subfamily. Monomer in solution; Homodimer and oligomer in the presence of negatively charged lipids forming a pore with a size ranging between 20 and 30 Angstroms. Expressed by the venom gland.

It localises to the secreted. It is found in the target cell membrane. In terms of biological role, shows cytolytic activity on many different cells by forming pore in lipid membranes. In vivo, increases heart rate or kills the animal by cardiac arrest. In addition, it binds to heparin with high affinity, interacts with Kv channel-interacting protein 1 (KCNIP1) in a calcium-independent manner, and binds to integrin alpha-V/beta-3 (ITGAV/ITGB3) with moderate affinity. The protein is Cytotoxin 7 of Naja sputatrix (Malayan spitting cobra).